Consider the following 152-residue polypeptide: Nascent polypeptide-associated complex subunit beta (152 aa).

Disordered stretches follow at residues 19 to 39 (IGKG…AGDD) and 125 to 152 (NMQK…SKVE). The segment covering 23 to 32 (TPRRKVKRAP) has biased composition (basic residues). Residues 36 to 101 (AGDDKKLQAT…GEDKELTELV (66 aa)) form the NAC-A/B domain.

It belongs to the NAC-beta family. Part of the nascent polypeptide-associated complex (NAC), consisting of npc-1/egd2 and npc-2/egd1. NAC associates with ribosomes via npc-2/egd1.

It is found in the cytoplasm. The protein localises to the nucleus. Component of the nascent polypeptide-associated complex (NAC), a dynamic component of the ribosomal exit tunnel, protecting the emerging polypeptides from interaction with other cytoplasmic proteins to ensure appropriate nascent protein targeting. The NAC complex also promotes mitochondrial protein import by enhancing productive ribosome interactions with the outer mitochondrial membrane and blocks the inappropriate interaction of ribosomes translating non-secretory nascent polypeptides with translocation sites in the membrane of the endoplasmic reticulum. Npc-2/egd1 may act as a transcription factor that exert a negative effect on the expression of several genes that are transcribed by RNA polymerase II. This is Nascent polypeptide-associated complex subunit beta (npc-2) from Neurospora crassa (strain ATCC 24698 / 74-OR23-1A / CBS 708.71 / DSM 1257 / FGSC 987).